Consider the following 1242-residue polypeptide: Membrane-associated phosphatidylinositol transfer protein 1 (1242 aa).

Phosphothreonine is present on residues threonine 59, threonine 282, and threonine 287. The tract at residues 259–330 (CNTGSEGPEA…HGGGVSPQSL (72 aa)) is disordered. Residues 272–282 (GKPSTETQPGT) are compositionally biased toward polar residues. A compositionally biased stretch (low complexity) spans 299 to 319 (ASPDASFGKQWSSSSRSSYSS). Phosphoserine occurs at positions 300, 304, 319, 326, 329, 342, 345, 346, and 373. Serine 382 carries the post-translational modification Phosphoserine; by CDK1. The segment covering 581–593 (AGTGSRGSSRRGS) has biased composition (low complexity). A disordered region spans residues 581–678 (AGTGSRGSSR…PASSEAPDGP (98 aa)). A phosphoserine mark is found at serine 593, serine 600, and serine 621. The segment covering 643 to 656 (GSQNSLQVAPTVTS) has biased composition (polar residues). The 195-residue stretch at 684–878 (LDFKVSGFFL…VAFILRQVIE (195 aa)) folds into the DDHD domain. Residue serine 894 is modified to Phosphoserine. The segment at 1207–1242 (RSRGPSQVDLEGPGTPPTTLARGKTRSISLKLDSEE) is disordered. Arginine 1209 is modified (omega-N-methylarginine). At serine 1235 the chain carries Phosphoserine.

This sequence belongs to the PtdIns transfer protein family. PI transfer class IIA subfamily. As to quaternary structure, interacts with PIK4CA and VAPB. Interacts with PTK2B via its C-terminus. Interacts with RHOA. Has higher affinity for the inactive, GDP-bound form of RHOA. The CDK1-phosphorylated form interacts with PLK1. Post-translationally, phosphorylated on multiple sites by CDK1 at the onset of mitosis. Phosphorylation facilitates dissociation from the Golgi complex and is required for interaction with PLK1. Phosphorylated on threonine residues upon treatment with oleic acid. In terms of processing, phosphorylated on tyrosine residues by PTK2B.

It is found in the cytoplasm. The protein resides in the golgi apparatus. Its subcellular location is the golgi stack membrane. It localises to the endoplasmic reticulum membrane. The protein localises to the lipid droplet. It is found in the cleavage furrow. The protein resides in the midbody. It catalyses the reaction a 1,2-diacyl-sn-glycero-3-phospho-(1D-myo-inositol)(in) = a 1,2-diacyl-sn-glycero-3-phospho-(1D-myo-inositol)(out). In terms of biological role, catalyzes the transfer of phosphatidylinositol (PI) between membranes. Binds PI, phosphatidylcholine (PC) and phosphatidic acid (PA) with the binding affinity order of PI &gt; PA &gt; PC. Regulates RHOA activity, and plays a role in cytoskeleton remodeling. Necessary for normal completion of cytokinesis. Plays a role in maintaining normal diacylglycerol levels in the Golgi apparatus. Necessary for maintaining the normal structure of the endoplasmic reticulum and the Golgi apparatus. Required for protein export from the endoplasmic reticulum and the Golgi. Binds calcium ions. This is Membrane-associated phosphatidylinositol transfer protein 1 (Pitpnm1) from Rattus norvegicus (Rat).